A 156-amino-acid polypeptide reads, in one-letter code: Small ribosomal subunit protein uS7c (156 aa).

Belongs to the universal ribosomal protein uS7 family. In terms of assembly, part of the 30S ribosomal subunit.

It localises to the plastid. The protein resides in the chloroplast. In terms of biological role, one of the primary rRNA binding proteins, it binds directly to 16S rRNA where it nucleates assembly of the head domain of the 30S subunit. The polypeptide is Small ribosomal subunit protein uS7c (rps7) (Mesostigma viride (Green alga)).